A 352-amino-acid polypeptide reads, in one-letter code: MDYQVSSPTYDIDYYTSEPCQKINVKQIAARLLPPLYSLVFIFGFVGNILVVLILINCKRLKSMTDIYLLNLAISDLLFLLTIPFWAHYAAAQWDFGNTMCQLLTGLYLIGFFSGIFFIILLTIDRYLAIVHAVFALKARTVTFGLVTSVITWVVAVFASLPGIIFTRSQREGLHYTCSSHFPSSQYQFWKNFQTLKIVILGLVLPLLVMVICYSGILKTLLRCRNEKKRHRAVRLIFTIMIVYFLFWAPYNIVLLLNTFQEFFGLNNCSSSNRLDQAMQVTETLGMTHCCINPIIYAFVGEKFRNYLLVFFQKHLAKRFCKCCSIFQQEAPERASSVYTRSTGEQETTVGL.

Residues 1–30 (MDYQVSSPTYDIDYYTSEPCQKINVKQIAA) lie on the Extracellular side of the membrane. A Sulfotyrosine modification is found at Y3. O-linked (GalNAc...) serine glycosylation is found at S6 and S7. Residues Y10, Y14, and Y15 each carry the sulfotyrosine modification. 2 cysteine pairs are disulfide-bonded: C20-C269 and C101-C178. A helical membrane pass occupies residues 31–58 (RLLPPLYSLVFIFGFVGNILVVLILINC). Topologically, residues 59–68 (KRLKSMTDIY) are cytoplasmic. The helical transmembrane segment at 69 to 89 (LLNLAISDLLFLLTIPFWAHY) threads the bilayer. At 90-102 (AAAQWDFGNTMCQ) the chain is on the extracellular side. A helical transmembrane segment spans residues 103-124 (LLTGLYLIGFFSGIFFIILLTI). The Cytoplasmic portion of the chain corresponds to 125–141 (DRYLAIVHAVFALKART). A helical membrane pass occupies residues 142-166 (VTFGLVTSVITWVVAVFASLPGIIF). Residues 167-198 (TRSQREGLHYTCSSHFPSSQYQFWKNFQTLKI) lie on the Extracellular side of the membrane. A helical membrane pass occupies residues 199 to 218 (VILGLVLPLLVMVICYSGIL). Residues 219-235 (KTLLRCRNEKKRHRAVR) are Cytoplasmic-facing. A helical membrane pass occupies residues 236-260 (LIFTIMIVYFLFWAPYNIVLLLNTF). Residues 261-277 (QEFFGLNNCSSSNRLDQ) are Extracellular-facing. Residues 278–301 (AMQVTETLGMTHCCINPIIYAFVG) traverse the membrane as a helical segment. Residues 302-352 (EKFRNYLLVFFQKHLAKRFCKCCSIFQQEAPERASSVYTRSTGEQETTVGL) lie on the Cytoplasmic side of the membrane. S-palmitoyl cysteine attachment occurs at residues C321, C323, and C324. Residues S336, S337, and S342 each carry the phosphoserine; by BARK1 modification.

Belongs to the G-protein coupled receptor 1 family. Interacts with PRAF2. Efficient ligand binding to CCL3/MIP-1alpha and CCL4/MIP-1beta requires sulfation, O-glycosylation and sialic acid modifications. Glycosylation on Ser-6 is required for efficient binding of CCL4. Interacts with GRK2. Interacts with ARRB1 and ARRB2. Interacts with CNIH4. Interacts with S100A4; this interaction stimulates T-lymphocyte chemotaxis. Sulfated on at least 2 of the N-terminal tyrosines. Sulfation is required for efficient binding of the chemokines, CCL3 and CCL4. In terms of processing, palmitoylation in the C-terminal is important for cell surface expression. Post-translationally, phosphorylation on serine residues in the C-terminal is stimulated by binding CC chemokines especially by APO-RANTES. O-glycosylated, but not N-glycosylated. Ser-6 appears to be the major site even if Ser-7 may be also O-glycosylated. Also sialylated glycans present which contribute to chemokine binding. Thr-16 and Ser-17 may also be glycosylated and, if so, with small moieties such as a T-antigen.

It is found in the cell membrane. Functionally, receptor for a number of inflammatory CC-chemokines including CCL3/MIP-1-alpha, CCL4/MIP-1-beta and RANTES and subsequently transduces a signal by increasing the intracellular calcium ion level. May play a role in the control of granulocytic lineage proliferation or differentiation. Participates in T-lymphocyte migration to the infection site by acting as a chemotactic receptor. The chain is C-C chemokine receptor type 5 (CCR5) from Allochrocebus lhoesti (L'Hoest's monkey).